The primary structure comprises 358 residues: Peptide chain release factor 1 (358 aa).

Q237 is modified (N5-methylglutamine).

Belongs to the prokaryotic/mitochondrial release factor family. Post-translationally, methylated by PrmC. Methylation increases the termination efficiency of RF1.

The protein resides in the cytoplasm. Functionally, peptide chain release factor 1 directs the termination of translation in response to the peptide chain termination codons UAG and UAA. The polypeptide is Peptide chain release factor 1 (Streptomyces coelicolor (strain ATCC BAA-471 / A3(2) / M145)).